Reading from the N-terminus, the 287-residue chain is Intermediate filament family orphan 2 (287 aa).

Positions 1–254 (MNLQTMVDTL…RLIKGSADRN (254 aa)) constitute an IF rod domain. The interval 248 to 287 (KGSADRNSPSPSSVASSDSGSTDEIQDDLEREADVEPMVS) is disordered. The segment covering 255-267 (SPSPSSVASSDSG) has biased composition (low complexity). The segment covering 271–287 (EIQDDLEREADVEPMVS) has biased composition (acidic residues).

Belongs to the intermediate filament family.

This chain is Intermediate filament family orphan 2 (Iffo2), found in Rattus norvegicus (Rat).